Here is a 460-residue protein sequence, read N- to C-terminus: Glutamate--tRNA ligase 2 (460 aa).

A 'HIGH' region motif is present at residues P8–G18. Residues K237–R241 carry the 'KMSKS' region motif. K240 contacts ATP.

The protein belongs to the class-I aminoacyl-tRNA synthetase family. Glutamate--tRNA ligase type 1 subfamily. As to quaternary structure, monomer.

It localises to the cytoplasm. The catalysed reaction is tRNA(Glu) + L-glutamate + ATP = L-glutamyl-tRNA(Glu) + AMP + diphosphate. Catalyzes the attachment of glutamate to tRNA(Glu) in a two-step reaction: glutamate is first activated by ATP to form Glu-AMP and then transferred to the acceptor end of tRNA(Glu). The polypeptide is Glutamate--tRNA ligase 2 (Campylobacter fetus subsp. fetus (strain 82-40)).